A 105-amino-acid polypeptide reads, in one-letter code: uncharacterized protein (105 aa).

This is an uncharacterized protein from Haemophilus influenzae (strain ATCC 51907 / DSM 11121 / KW20 / Rd).